A 149-amino-acid chain; its full sequence is Flagellar assembly factor FliW (149 aa).

It belongs to the FliW family. In terms of assembly, interacts with translational regulator CsrA and flagellin(s).

It localises to the cytoplasm. In terms of biological role, acts as an anti-CsrA protein, binds CsrA and prevents it from repressing translation of its target genes, one of which is flagellin. Binds to flagellin and participates in the assembly of the flagellum. The polypeptide is Flagellar assembly factor FliW (Thermotoga neapolitana (strain ATCC 49049 / DSM 4359 / NBRC 107923 / NS-E)).